The sequence spans 401 residues: Phosphoglycerate kinase (401 aa).

Substrate is bound by residues 24–26 (DFN), Arg40, 63–66 (HFGR), Arg122, and Arg155. Residues Lys206, Gly297, Glu328, and 357 to 360 (GGDS) contribute to the ATP site.

This sequence belongs to the phosphoglycerate kinase family. As to quaternary structure, monomer.

Its subcellular location is the cytoplasm. It catalyses the reaction (2R)-3-phosphoglycerate + ATP = (2R)-3-phospho-glyceroyl phosphate + ADP. It functions in the pathway carbohydrate degradation; glycolysis; pyruvate from D-glyceraldehyde 3-phosphate: step 2/5. The polypeptide is Phosphoglycerate kinase (Acaryochloris marina (strain MBIC 11017)).